A 357-amino-acid polypeptide reads, in one-letter code: MRVSDFRFDLPESLIAHYPHPQRSGCRLLSLEGKTGNLSHGVFTDVLDKLNAGDLLVFNNTRVIPARIYGRKASGGKIEVLVERMLDEHRVLAHVRASKSPKEGASLILGEDESVQATMIARHDTLFEIRFDDERDVLTILNSIGHMPLPPYIDRPDERSDKELYQTVYNERPGAVAAPTAGLHFDEPLLEALRNKGVEMAFVTLHVGAGTFQPVRVDNIEEHTMHSEYAEVPQEVVDAVLACKARGNRVIAVGTTSVRSLESAAKAAKDALIAPFFDDTQIFIYPGYQYQIIDALITNFHLPESTLIMLVSAFAGYKNTMNAYNVAVEQKYRFFSYGDAMFITRNPLAINEKVGEE.

Belongs to the QueA family. In terms of assembly, monomer.

The protein localises to the cytoplasm. It carries out the reaction 7-aminomethyl-7-carbaguanosine(34) in tRNA + S-adenosyl-L-methionine = epoxyqueuosine(34) in tRNA + adenine + L-methionine + 2 H(+). It participates in tRNA modification; tRNA-queuosine biosynthesis. In terms of biological role, transfers and isomerizes the ribose moiety from AdoMet to the 7-aminomethyl group of 7-deazaguanine (preQ1-tRNA) to give epoxyqueuosine (oQ-tRNA). The chain is S-adenosylmethionine:tRNA ribosyltransferase-isomerase from Proteus mirabilis (strain HI4320).